The following is a 591-amino-acid chain: Aspartate--tRNA(Asp/Asn) ligase (591 aa).

Position 174 (Glu-174) interacts with L-aspartate. The aspartate stretch occupies residues 198–201 (QLFK). Arg-220 lines the L-aspartate pocket. ATP contacts are provided by residues 220–222 (RDE) and Gln-229. An L-aspartate-binding site is contributed by His-450. Glu-483 is a binding site for ATP. Arg-490 is an L-aspartate binding site. Residue 535-538 (GLDR) coordinates ATP.

The protein belongs to the class-II aminoacyl-tRNA synthetase family. Type 1 subfamily. In terms of assembly, homodimer.

The protein localises to the cytoplasm. It catalyses the reaction tRNA(Asx) + L-aspartate + ATP = L-aspartyl-tRNA(Asx) + AMP + diphosphate. Functionally, aspartyl-tRNA synthetase with relaxed tRNA specificity since it is able to aspartylate not only its cognate tRNA(Asp) but also tRNA(Asn). Reaction proceeds in two steps: L-aspartate is first activated by ATP to form Asp-AMP and then transferred to the acceptor end of tRNA(Asp/Asn). The protein is Aspartate--tRNA(Asp/Asn) ligase of Pseudomonas fluorescens (strain SBW25).